Here is a 275-residue protein sequence, read N- to C-terminus: NADPH-dependent 7-cyano-7-deazaguanine reductase (275 aa).

Position 81 to 83 (81 to 83 (IES)) interacts with substrate. Residue 83-84 (SK) coordinates NADPH. The active-site Thioimide intermediate is the cysteine 181. The Proton donor role is filled by aspartate 188. Position 220-221 (220-221 (HE)) interacts with substrate. 249–250 (RG) serves as a coordination point for NADPH.

The protein belongs to the GTP cyclohydrolase I family. QueF type 2 subfamily. As to quaternary structure, homodimer.

The protein resides in the cytoplasm. It carries out the reaction 7-aminomethyl-7-carbaguanine + 2 NADP(+) = 7-cyano-7-deazaguanine + 2 NADPH + 3 H(+). It functions in the pathway tRNA modification; tRNA-queuosine biosynthesis. In terms of biological role, catalyzes the NADPH-dependent reduction of 7-cyano-7-deazaguanine (preQ0) to 7-aminomethyl-7-deazaguanine (preQ1). The sequence is that of NADPH-dependent 7-cyano-7-deazaguanine reductase from Xylella fastidiosa (strain M12).